A 317-amino-acid chain; its full sequence is Beta-ketoacyl-[acyl-carrier-protein] synthase III (317 aa).

Catalysis depends on residues Cys112 and His244. An ACP-binding region spans residues 245-249; that stretch reads QANLR. The active site involves Asn274.

Belongs to the thiolase-like superfamily. FabH family. Homodimer.

The protein localises to the cytoplasm. It catalyses the reaction malonyl-[ACP] + acetyl-CoA + H(+) = 3-oxobutanoyl-[ACP] + CO2 + CoA. Its pathway is lipid metabolism; fatty acid biosynthesis. Functionally, catalyzes the condensation reaction of fatty acid synthesis by the addition to an acyl acceptor of two carbons from malonyl-ACP. Catalyzes the first condensation reaction which initiates fatty acid synthesis and may therefore play a role in governing the total rate of fatty acid production. Possesses both acetoacetyl-ACP synthase and acetyl transacylase activities. Its substrate specificity determines the biosynthesis of branched-chain and/or straight-chain of fatty acids. This Escherichia coli O9:H4 (strain HS) protein is Beta-ketoacyl-[acyl-carrier-protein] synthase III.